The primary structure comprises 431 residues: Protein prenyltransferase alpha subunit repeat-containing protein 1-B (431 aa).

5 PFTA repeats span residues 85–118, 120–153, 178–211, 217–250, and 293–326; these read ELID…TLNP, KDLQ…VQEL, EEMH…GNLN, DELS…LCKT, and EEMK…HQLL. Residues 363-383 form a disordered region; the sequence is PMDVDGMSDPNKQGYTQETKR. A PFTA 6 repeat occupies 394–431; sequence SLDSELRFINCVLTNCCSPEQSRFAASYRKWLLSLQGY.

Belongs to the protein prenyltransferase subunit alpha family.

This Xenopus laevis (African clawed frog) protein is Protein prenyltransferase alpha subunit repeat-containing protein 1-B (ptar1-b).